The chain runs to 261 residues: MGETFSQLASQKDENKLILPPNPAFGSKAASYSSMGNSRPFFSCVPCERAAGAGFVTCPTCQGSGEIPRELEKQLVALIPYGDQRLKPRHTKLSVFLAVSICLVTSSLIIFFLFPRTIAVQPVGLNSSTVATDEANVYLNITSILNISNNNYCPITVTQLTIEVLHLSLVVGQVSHSLLLHIGPLASEQMFYAVTNRINDENTYKICTWLEIKVHHVLLYIQGTLTYSYLSRSEQLVFQSYEYVDCRGNTSVPHLLVSHPP.

A helical membrane pass occupies residues 95–115 (VFLAVSICLVTSSLIIFFLFP).

The protein belongs to the TMEM106 family.

It localises to the cell membrane. Activates macrophages and polarizes them into M1-like macrophages through the activation of the MAPK and NF-kappaB signaling pathway. Upon activation, up-regulates the expression of CD80, CD86, CD69 and MHC II on macrophages, and induces the release of pro-inflammatory cytokines such as TNF, IL1B, IL6, CCL2 and nitric oxide. May play a role in inhibition of proliferation and migration. The polypeptide is Transmembrane protein 106A (TMEM106A) (Bos taurus (Bovine)).